We begin with the raw amino-acid sequence, 363 residues long: Chorismate synthase (363 aa).

Residues 44-63 are disordered; sequence DLDRRKPGTSRHTTQRQEPD. Residues Arg48 and Arg54 each coordinate NADP(+). FMN-binding positions include 125–127, 237–238, Gly277, 292–296, and Arg318; these read RSS, NA, and KATSS.

The protein belongs to the chorismate synthase family. Homotetramer. FMNH2 serves as cofactor.

It catalyses the reaction 5-O-(1-carboxyvinyl)-3-phosphoshikimate = chorismate + phosphate. The protein operates within metabolic intermediate biosynthesis; chorismate biosynthesis; chorismate from D-erythrose 4-phosphate and phosphoenolpyruvate: step 7/7. Functionally, catalyzes the anti-1,4-elimination of the C-3 phosphate and the C-6 proR hydrogen from 5-enolpyruvylshikimate-3-phosphate (EPSP) to yield chorismate, which is the branch point compound that serves as the starting substrate for the three terminal pathways of aromatic amino acid biosynthesis. This reaction introduces a second double bond into the aromatic ring system. The sequence is that of Chorismate synthase from Pseudomonas fluorescens (strain SBW25).